Here is a 2532-residue protein sequence, read N- to C-terminus: Lovastatin diketide synthase lovF (2532 aa).

The Ketosynthase family 3 (KS3) domain maps to 10 to 430; it reads PAPIAMVGMG…GANAHAIVEQ (421 aa). Residues Cys-183, His-318, and His-353 each act as for beta-ketoacyl synthase activity in the active site. The malonyl-CoA:ACP transacylase (MAT) domain stretch occupies residues 545–870; that stretch reads VFTGQGAQWF…PYLSCLSRGK (326 aa). Ser-635 functions as the For malonyltransferase activity in the catalytic mechanism. The tract at residues 941-1078 is N-terminal hotdog fold; the sequence is HDLIGLQEPL…GLVRAEMDQP (138 aa). Residues 941-1246 are dehydratase (DH) domain; the sequence is HDLIGLQEPL…LEGLVFQSLG (306 aa). The PKS/mFAS DH domain occupies 941 to 1251; it reads HDLIGLQEPL…FQSLGASLGT (311 aa). The active-site Proton acceptor; for dehydratase activity is the His-973. The segment at 1075-1094 is disordered; sequence MDQPPSSLSNQQRIDPRPWS. The span at 1078 to 1087 shows a compositional bias: polar residues; the sequence is PPSSLSNQQR. The segment at 1092-1251 is C-terminal hotdog fold; sequence PWSRKTAPQE…FQSLGASLGT (160 aa). Asp-1159 functions as the Proton donor; for dehydratase activity in the catalytic mechanism. The segment at 1423–1607 is methyltransferase (CMet) domain; sequence ELVRLCCHKN…ARDCDSHEFY (185 aa). The enoylreductase (ER) domain stretch occupies residues 1825–2144; that stretch reads GLLDSLHFTK…SGQHVGKIVV (320 aa). Positions 2168-2340 are ketoreductase (KR) domain; it reads SYLVAGGLGG…AVTIDLGMVQ (173 aa). The Carrier domain occupies 2453 to 2530; the sequence is ESIAVIMEAM…KVAEVVLQRY (78 aa). O-(pantetheine 4'-phosphoryl)serine is present on Ser-2490.

In terms of assembly, interacts with LovD. Requires pantetheine 4'-phosphate as cofactor.

The catalysed reaction is holo-[2-methylbutanoate polyketide synthase] + 2 malonyl-CoA + S-adenosyl-L-methionine + 2 NADPH + 3 H(+) = (S)-2-methylbutanoyl-[2-methylbutanoate polyketide synthase] + S-adenosyl-L-homocysteine + 2 CO2 + 2 NADP(+) + 2 CoA + H2O. Its pathway is polyketide biosynthesis; lovastatin biosynthesis. Its function is as follows. Lovastatin diketide synthase; part of the gene cluster that mediates the biosynthesis of lovastatin (also known as mevinolin, mevacor or monacolin K), a hypolipidemic inhibitor of (3S)-hydroxymethylglutaryl-coenzyme A (HMG-CoA) reductase (HMGR). The first step in the biosynthesis of lovastatin is the production of dihydromonacolin L acid by the lovastatin nonaketide synthase lovB and the trans-acting enoyl reductase lovC via condensation of one acetyl-CoA unit and 8 malonyl-CoA units. Dihydromonacolin L acid is released from lovB by the thioesterase lovG. Next, dihydromonacolin L acid is oxidized by the dihydromonacolin L monooxygenase lovA twice to form monacolin J acid. The 2-methylbutyrate moiety of lovastatin is synthesized by the lovastatin diketide synthase lovF via condensation of one acetyl-CoA unit and one malonyl-CoA unit. Finally, the covalent attachment of this moiety to monacolin J acid is catalyzed by the transesterase lovD to yield lovastatin. LovD has broad substrate specificity and can also convert monacolin J to simvastatin using alpha-dimethylbutanoyl-S-methyl-3-mercaptopropionate (DMB-S-MMP) as the thioester acyl donor, and can also catalyze the reverse reaction and function as hydrolase in vitro. LovD has much higher activity with LovF-bound 2-methylbutanoate than with free diketide substrates. This chain is Lovastatin diketide synthase lovF, found in Aspergillus terreus.